A 523-amino-acid chain; its full sequence is Translation initiation factor eIF2B subunit delta (523 aa).

Residues 1 to 147 (MAAVAVAVRE…PSGVKRLPEY (147 aa)) form a disordered region. Position 2 is an N-acetylalanine (alanine 2). Serine 12 bears the Phosphoserine mark. Basic and acidic residues predominate over residues 30-40 (EMTKEEKLQLR). Residues 41–51 (KEKKQQKKKRK) show a composition bias toward basic residues. Threonine 86 carries the post-translational modification Phosphothreonine. Positions 87–121 (PREKVPAGRSKAELRAERRAKQEAERALKQARKGE) are enriched in basic and acidic residues. Serine 130 is modified (phosphoserine). A may bind the chemical integrated stress response (ISR) inhibitor ISRIB region spans residues 170–179 (RKDYGSKVSL).

It belongs to the eIF-2B alpha/beta/delta subunits family. In terms of assembly, component of the translation initiation factor 2B (eIF2B) complex which is a heterodecamer of two sets of five different subunits: alpha, beta, gamma, delta and epsilon. Subunits alpha, beta and delta comprise a regulatory subcomplex and subunits epsilon and gamma comprise a catalytic subcomplex. Within the complex, the hexameric regulatory complex resides at the center, with the two heterodimeric catalytic subcomplexes bound on opposite sides.

It is found in the cytoplasm. The protein resides in the cytosol. With respect to regulation, activated by the chemical integrated stress response (ISR) inhibitor ISRIB which stimulates guanine nucleotide exchange factor activity for both phosphorylated and unphosphorylated eIF2. Functionally, acts as a component of the translation initiation factor 2B (eIF2B) complex, which catalyzes the exchange of GDP for GTP on eukaryotic initiation factor 2 (eIF2) gamma subunit. Its guanine nucleotide exchange factor activity is repressed when bound to eIF2 complex phosphorylated on the alpha subunit, thereby limiting the amount of methionyl-initiator methionine tRNA available to the ribosome and consequently global translation is repressed. This chain is Translation initiation factor eIF2B subunit delta (EIF2B4), found in Homo sapiens (Human).